The following is a 599-amino-acid chain: Matrix metallopeptidase-21 (599 aa).

The N-terminal stretch at 1–20 (MLTVIRRIFIIQTFIFITAE) is a signal peptide. Positions 21 to 170 (KIFHSRDHSD…NHEHQAPVRK (150 aa)) are excised as a propeptide. Residue cysteine 130 participates in Zn(2+) binding. The disordered stretch occupies residues 141–170 (DVTGSNSTRNHIRTSTNTSHNHEHQAPVRK). Over residues 143-159 (TGSNSTRNHIRTSTNTS) the composition is skewed to polar residues. Histidine 309 provides a ligand contact to Zn(2+). Glutamate 310 is a catalytic residue. The Zn(2+) site is built by histidine 313 and histidine 319. Cysteines 355 and 586 form a disulfide. Hemopexin repeat units follow at residues 356–415 (TGRF…WHGL), 417–473 (SGGV…FPGV), 474–522 (SGPL…FPAI), and 529–585 (VRSL…WFDI). Asparagine 398 is a glycosylation site (N-linked (GlcNAc...) asparagine).

Belongs to the peptidase M10A family. Post-translationally, the precursor is cleaved by a furin endopeptidase.

In terms of biological role, plays a specialized role in the generation of left-right asymmetry during embryogenesis. May act as a negative regulator of the NOTCH-signaling pathway. This is Matrix metallopeptidase-21 from Danio rerio (Zebrafish).